The sequence spans 359 residues: Chorismate synthase (359 aa).

Arginine 47 is an NADP(+) binding site. Residues 123 to 125 (RSS), glycine 283, 298 to 302 (KPTSS), and arginine 326 each bind FMN.

The protein belongs to the chorismate synthase family. Homotetramer. FMNH2 serves as cofactor.

The enzyme catalyses 5-O-(1-carboxyvinyl)-3-phosphoshikimate = chorismate + phosphate. It participates in metabolic intermediate biosynthesis; chorismate biosynthesis; chorismate from D-erythrose 4-phosphate and phosphoenolpyruvate: step 7/7. Functionally, catalyzes the anti-1,4-elimination of the C-3 phosphate and the C-6 proR hydrogen from 5-enolpyruvylshikimate-3-phosphate (EPSP) to yield chorismate, which is the branch point compound that serves as the starting substrate for the three terminal pathways of aromatic amino acid biosynthesis. This reaction introduces a second double bond into the aromatic ring system. This Chlamydia caviae (strain ATCC VR-813 / DSM 19441 / 03DC25 / GPIC) (Chlamydophila caviae) protein is Chorismate synthase.